Reading from the N-terminus, the 243-residue chain is Small ribosomal subunit protein uS3 (243 aa).

In terms of domain architecture, KH type-2 spans 39–107 (LRKLISKELQ…KIKLNIKEIH (69 aa)). A disordered region spans residues 212-243 (VAKSPAEPATTAPTPAPERRERQPRRNSNASA).

It belongs to the universal ribosomal protein uS3 family. In terms of assembly, part of the 30S ribosomal subunit. Forms a tight complex with proteins S10 and S14.

Its function is as follows. Binds the lower part of the 30S subunit head. Binds mRNA in the 70S ribosome, positioning it for translation. This chain is Small ribosomal subunit protein uS3, found in Chloroflexus aurantiacus (strain ATCC 29364 / DSM 637 / Y-400-fl).